The primary structure comprises 86 residues: Exodeoxyribonuclease 7 small subunit (86 aa).

The tract at residues M1–S26 is disordered.

This sequence belongs to the XseB family. In terms of assembly, heterooligomer composed of large and small subunits.

It localises to the cytoplasm. The enzyme catalyses Exonucleolytic cleavage in either 5'- to 3'- or 3'- to 5'-direction to yield nucleoside 5'-phosphates.. Functionally, bidirectionally degrades single-stranded DNA into large acid-insoluble oligonucleotides, which are then degraded further into small acid-soluble oligonucleotides. The sequence is that of Exodeoxyribonuclease 7 small subunit from Helicobacter pylori (strain HPAG1).